The following is a 515-amino-acid chain: 1-pyrroline-5-carboxylate dehydrogenase 2 (515 aa).

Catalysis depends on residues glutamate 286 and cysteine 320.

Belongs to the aldehyde dehydrogenase family. RocA subfamily.

It carries out the reaction L-glutamate 5-semialdehyde + NAD(+) + H2O = L-glutamate + NADH + 2 H(+). It functions in the pathway amino-acid degradation; L-proline degradation into L-glutamate; L-glutamate from L-proline: step 2/2. Functionally, important for the use of proline as a sole carbon and energy source or a sole nitrogen source. The protein is 1-pyrroline-5-carboxylate dehydrogenase 2 of Bacillus subtilis (strain 168).